A 413-amino-acid chain; its full sequence is Serine hydroxymethyltransferase (413 aa).

(6S)-5,6,7,8-tetrahydrofolate-binding positions include L119 and 123 to 125 (GHL). An N6-(pyridoxal phosphate)lysine modification is found at K228. (6S)-5,6,7,8-tetrahydrofolate is bound at residue E243.

This sequence belongs to the SHMT family. In terms of assembly, homodimer. Pyridoxal 5'-phosphate is required as a cofactor.

It is found in the cytoplasm. The enzyme catalyses (6R)-5,10-methylene-5,6,7,8-tetrahydrofolate + glycine + H2O = (6S)-5,6,7,8-tetrahydrofolate + L-serine. Its pathway is one-carbon metabolism; tetrahydrofolate interconversion. The protein operates within amino-acid biosynthesis; glycine biosynthesis; glycine from L-serine: step 1/1. Functionally, catalyzes the reversible interconversion of serine and glycine with tetrahydrofolate (THF) serving as the one-carbon carrier. This reaction serves as the major source of one-carbon groups required for the biosynthesis of purines, thymidylate, methionine, and other important biomolecules. Also exhibits THF-independent aldolase activity toward beta-hydroxyamino acids, producing glycine and aldehydes, via a retro-aldol mechanism. In Desulforamulus reducens (strain ATCC BAA-1160 / DSM 100696 / MI-1) (Desulfotomaculum reducens), this protein is Serine hydroxymethyltransferase.